Reading from the N-terminus, the 1483-residue chain is Heme-responsive zinc finger transcription factor HAP1 (1483 aa).

Residues 1 to 50 are compositionally biased toward polar residues; sequence MSNTPYNSSVPSIASMTQSSVSRSPNMHTATTPGANTSSNSPPLHMSSDS. The tract at residues 1–56 is disordered; that stretch reads MSNTPYNSSVPSIASMTQSSVSRSPNMHTATTPGANTSSNSPPLHMSSDSSKIKRK. Zn(2+) contacts are provided by C64, C67, C74, C81, C84, and C93. Positions 64-93 form a DNA-binding region, zn(2)-C6 fungal-type; sequence CTICRKRKVKCDKLRPHCQQCTKTGVAHLC. Residues 105–134 adopt a coiled-coil conformation; it reads EKELLKDNELKKLRERVKSLEKTLSKVHSS. The segment at 126 to 208 is disordered; the sequence is KTLSKVHSSP…ANSSSLSISN (83 aa). Positions 130–142 are enriched in low complexity; sequence KVHSSPSSNSLKS. Composition is skewed to polar residues over residues 143 to 152 and 160 to 176; these read YNTPESSNLF and TLVN…SHMH. Positions 177-208 are enriched in low complexity; it reads QQQQQQQQQEQQQDFSRSANANANSSSLSISN. Positions 244–444 are heme-responsive; required for HMC formation; the sequence is KGDPYLKLLW…NTIPHHQPQS (201 aa). HRM repeat units lie at residues 280–285, 299–304, 323–328, 347–352, 389–394, and 415–420; these read KCPINH, KCPVDH, RCPVDH, and RCPIDH. 2 stretches are compositionally biased toward polar residues: residues 432 to 447 and 706 to 734; these read STHN…SGSH and QLNA…NPTL. Disordered stretches follow at residues 432–458 and 706–767; these read STHN…NRKH and QLNA…KENQ. Low complexity predominate over residues 735-759; that stretch reads NNNMSAATTNSSSRSGSADSRSGSN. The HRM 7 repeat unit spans residues 1192 to 1197; that stretch reads KCPVYQ.

In terms of assembly, binds DNA as a homodimer. Interacts with SRO9 and YDJ1. In the absence of heme, binds to at least four cellular proteins, including YDJ1 and SRO9, forming a high-molecular-weight complex (HMC) which results in repression of its activity and dictates its DNA-binding specificity.

The protein resides in the nucleus. Functionally, regulation of oxygen dependent gene expression. It modulates the expression of Iso-1 (CYP1) and Iso-2 (CYP3) cytochrome c. In response to heme, promotes transcription of genes encoding functions required for respiration, controlling oxidative damage and repression of anaerobic genes. Binds to the sequence 5'-CGGNNNTNNCGG-3'. This is Heme-responsive zinc finger transcription factor HAP1 (HAP1) from Saccharomyces cerevisiae (strain Lalvin EC1118 / Prise de mousse) (Baker's yeast).